The sequence spans 961 residues: MEQDYKPHEIEEKWQKKWNESLIFQADPDKREKFFITIPYPYLNGNLHAGHTRTFTIGDVVARHKRMLGYNVLYPMGFHVTGTPIVGLAELIASRDPQTMDVYEHLHGIPGDILPTLDTPEKIVDYFKREAEKAMRMIGYSIDWRRKFTTTDPTYKKFIEWQYIRLEEKGLIVKGSHPVKWCPNDNNPVEDHDILYGEEATIVEYTLIKFRYNDLVLPCATLRPETTFGVTNLWVNPDVDYVKARVEKDGNEEFWVVSKEAFRKLTFTDRTVEYVEDVPAKSIIGIKLTNPITGDEVISLPASFVKPENGSGIVMSVPAHAPFDYLALRDLYDADLSEYGITEDLRDIKLISLIQVPEFGEFPAKEIVESMGIANQKAPKAEEATKIVYRREFHGGVLKEITGKYRGYPVSKIKDVLTRDLIASNAGETFYEFSEPVVCRCGTPCVVNMVKGQWFLNYSNPEWKAKVYKCLSQMRIIPEEYRVEFENKVDWLKDKACARRKGLGTRLPFDKEWLIESLGDSTIYMSYYIIARFLERGDLALEQLTLSFFDYVLLGIGDSAAVSAETGLKQELVEEIRSHFNYWYPVDLRSSGKDLVPNHLLFFLFHHVALFEEEKWPRALAVNGFVSLEGQKMSKSKGPILTLESAVSAYGADITRMYILSTAEQTQDADWQKTGIDSARRQVDRFYSFAKDVIESGKRATLSTELKLIDRWMLSRMQKYIMETNIALDSIQTREAIQNSFFLLINDVRWYQRRGGEALLYYVLDNWVRLMAPFTPHLCEEIWEAMGHEDPISLAQYPLDNEDLIDEGAELAEEAVKSTLNDIEEIVRVTKMTPQKVYLYTAPAWKAEAIRCACELQIEAPLEVGALIKTLMANPELKRFGKEIPKFVQKIIPEFKSGGAERYETFAYLGLDEQALLKESASFLEKEIGCPVEIYSADSPEYDPQKKSRFAEPLRPAIYIE.

The 'HIGH' region signature appears at 41 to 51 (PYLNGNLHAGH). The 'KMSKS' region signature appears at 632-636 (KMSKS). ATP is bound at residue Lys635.

It belongs to the class-I aminoacyl-tRNA synthetase family.

The protein resides in the cytoplasm. It catalyses the reaction tRNA(Leu) + L-leucine + ATP = L-leucyl-tRNA(Leu) + AMP + diphosphate. The protein is Leucine--tRNA ligase of Methanosarcina acetivorans (strain ATCC 35395 / DSM 2834 / JCM 12185 / C2A).